The following is a 446-amino-acid chain: tRNA (guanine-N(7)-)-methyltransferase non-catalytic subunit TRM82 (446 aa).

The tract at residues 67-97 (LTQTSEDTEQENTAPYKKQKSSVSKPIKVPK) is disordered. A compositionally biased stretch (low complexity) spans 87–97 (SSVSKPIKVPK). WD repeat units follow at residues 107 to 147 (PIYN…TENC), 202 to 243 (GHVS…IVKH), and 247 to 287 (GHRE…LLSK).

This sequence belongs to the WD repeat TRM82 family. Forms a heterodimer with the catalytic subunit TRM8.

The protein localises to the nucleus. It functions in the pathway tRNA modification; N(7)-methylguanine-tRNA biosynthesis. Required for the formation of N(7)-methylguanine at position 46 (m7G46) in tRNA. In the complex, it is required to stabilize and induce conformational changes of the catalytic subunit. This chain is tRNA (guanine-N(7)-)-methyltransferase non-catalytic subunit TRM82, found in Debaryomyces hansenii (strain ATCC 36239 / CBS 767 / BCRC 21394 / JCM 1990 / NBRC 0083 / IGC 2968) (Yeast).